Reading from the N-terminus, the 309-residue chain is MPASLQEVKRRIESTKKTSQITSAMQMVSTAKLSQIQKHATSYQVYATKIRSVITHLSKSHLLDSVNTTSKNSDGKVNTLGMLRQRPVKTTGIVVITSDRGLVGSYNSNVIKETLELIENNHHSTEDVAIIAIGGTGADFFKKRGYNVAYEYRGISDIPTYKDARPLVEAIVSMYDKEVYDELFVCYSHFVNTLTSEFRAEKMLPVSAENMGHDDLTSNDEGYSIEYETEPSEDAILEVVLPQYAESLVYGAILDAKTSEHASSSTAMKSASDNAKDIISSLELQYNRARQSAITTEITEITGAQAALE.

The protein belongs to the ATPase gamma chain family. F-type ATPases have 2 components, CF(1) - the catalytic core - and CF(0) - the membrane proton channel. CF(1) has five subunits: alpha(3), beta(3), gamma(1), delta(1), epsilon(1). CF(0) has three main subunits: a, b and c.

The protein localises to the cell membrane. Produces ATP from ADP in the presence of a proton gradient across the membrane. The gamma chain is believed to be important in regulating ATPase activity and the flow of protons through the CF(0) complex. This Ligilactobacillus salivarius (strain UCC118) (Lactobacillus salivarius) protein is ATP synthase gamma chain.